The chain runs to 432 residues: Glutamate-1-semialdehyde 2,1-aminomutase 1 (432 aa).

K272 bears the N6-(pyridoxal phosphate)lysine mark.

Belongs to the class-III pyridoxal-phosphate-dependent aminotransferase family. HemL subfamily. In terms of assembly, homodimer. The cofactor is pyridoxal 5'-phosphate.

It localises to the cytoplasm. The catalysed reaction is (S)-4-amino-5-oxopentanoate = 5-aminolevulinate. The protein operates within porphyrin-containing compound metabolism; protoporphyrin-IX biosynthesis; 5-aminolevulinate from L-glutamyl-tRNA(Glu): step 2/2. The polypeptide is Glutamate-1-semialdehyde 2,1-aminomutase 1 (Exiguobacterium sibiricum (strain DSM 17290 / CCUG 55495 / CIP 109462 / JCM 13490 / 255-15)).